Consider the following 347-residue polypeptide: Ultraviolet-sensitive opsin (347 aa).

Over 1–37 (MSGEEEFYLFKNGSIGGPWDGPQYHIAPPWAFYLQTA) the chain is Extracellular. An N-linked (GlcNAc...) asparagine glycan is attached at asparagine 12. Residues 38–58 (FMGFVFMVGTPLNAIVLVVTI) form a helical membrane-spanning segment. Residues 59 to 69 (KYKKLRQPLNY) lie on the Cytoplasmic side of the membrane. A helical transmembrane segment spans residues 70 to 90 (ILVNISFCGFLACIICIFTVF). Residues 91 to 106 (VSSSQGYFVFGKHVCA) lie on the Extracellular side of the membrane. Cysteine 105 and cysteine 182 are disulfide-bonded. Residues 107 to 127 (FEGFMGATAGLVTGWSLAFLA) form a helical membrane-spanning segment. At 128–147 (FERYIVICKPLGNFRFTAKH) the chain is on the cytoplasmic side. Residues 148–168 (ALVVVVATWVIGIGVAIPPFF) form a helical membrane-spanning segment. Residues 169–197 (GWSRYVPEGLQCSCGPDWYTVGTKYRSEY) lie on the Extracellular side of the membrane. A helical membrane pass occupies residues 198-218 (YTWFLFIFCFIVPLSLIIFSY). Residues 219–247 (SQLLSALRAVAAQQQESATTQKAEREVSR) are Cytoplasmic-facing. The helical transmembrane segment at 248–268 (MVVVMVGSFCVCYVPYAALAM) threads the bilayer. At 269 to 282 (YMVNNREHGIDLRL) the chain is on the extracellular side. The chain crosses the membrane as a helical span at residues 283 to 303 (VTIPAFFSKSSCVYNPIIYCF). Residue lysine 291 is modified to N6-(retinylidene)lysine. The Cytoplasmic portion of the chain corresponds to 304 to 347 (MNKQFRGCIMEMVCGKPMTDDSDMSSSAQRTEVSSVSSSQVSPS). Residue cysteine 317 is the site of S-palmitoyl cysteine attachment. Residues 324 to 347 (DSDMSSSAQRTEVSSVSSSQVSPS) form a disordered region. The span at 328–347 (SSSAQRTEVSSVSSSQVSPS) shows a compositional bias: low complexity.

It belongs to the G-protein coupled receptor 1 family. Opsin subfamily. Post-translationally, phosphorylated on some or all of the serine and threonine residues present in the C-terminal region. Cone photoreceptor cells.

The protein localises to the membrane. Its function is as follows. Visual pigments are the light-absorbing molecules that mediate vision. They consist of an apoprotein, opsin, covalently linked to cis-retinal. The polypeptide is Ultraviolet-sensitive opsin (Melopsittacus undulatus (Budgerigar)).